The following is a 248-amino-acid chain: ATP synthase subunit a (248 aa).

Helical transmembrane passes span 27–47 (FTNS…LMLV), 83–103 (FFPL…IGIV), 113–133 (LIVT…YGFS), 142–162 (LFVP…IEVI), 192–212 (FVAM…LPLG), and 215–235 (IALT…FAIL).

It belongs to the ATPase A chain family. As to quaternary structure, F-type ATPases have 2 components, CF(1) - the catalytic core - and CF(0) - the membrane proton channel. CF(1) has five subunits: alpha(3), beta(3), gamma(1), delta(1), epsilon(1). CF(0) has four main subunits: a, b, b' and c.

It is found in the cell inner membrane. In terms of biological role, key component of the proton channel; it plays a direct role in the translocation of protons across the membrane. The protein is ATP synthase subunit a of Rhodopseudomonas palustris (strain ATCC BAA-98 / CGA009).